A 267-amino-acid polypeptide reads, in one-letter code: MPRLCGSRSGALLLTLLLQASMGVRGWCLESSQCQDLSTESNLLACIRACKPDLSAETPVFPGNGDAQPLTENPRKYVMGHFRWDRFGRRNGSSSGGGGGGGGAGQKREEEEVAAGEGPGPRGDGVAPGPRQDKRSYSMEHFRWGKPVGKKRRPVKVYPNGAEDELAEAFPLEFRRELAGAPPEPARDPEAPAEGAAARAELEYGLVAEAEAAEKKDEGPYKMEHFRWGSPPKDKRYGGFMTSEKSQTPLVTLFKNAIVKNAHKKGQ.

Residues 1–26 form the signal peptide; that stretch reads MPRLCGSRSGALLLTLLLQASMGVRG. Phe87 carries the post-translational modification Phenylalanine amide. Disordered stretches follow at residues 88–156 and 215–242; these read GRRN…RPVK and KKDEGPYKMEHFRWGSPPKDKRYGGFMT. An N-linked (GlcNAc...) asparagine glycan is attached at Asn91. The segment covering 94-105 has biased composition (gly residues); that stretch reads SSGGGGGGGGAG. A propeptide spanning residues 109–133 is cleaved from the precursor; sequence EEEEVAAGEGPGPRGDGVAPGPRQD. Residues 131–143 show a composition bias toward basic and acidic residues; that stretch reads RQDKRSYSMEHFR. Residue Ser136 is modified to N-acetylserine; in Corticotropin. Valine amide is present on Val148. Over residues 215 to 237 the composition is skewed to basic and acidic residues; that stretch reads KKDEGPYKMEHFRWGSPPKDKRY.

This sequence belongs to the POMC family. Specific enzymatic cleavages at paired basic residues yield the different active peptides. ACTH and MSH are produced by the pituitary gland.

The protein localises to the secreted. Functionally, stimulates the adrenal glands to release cortisol. In terms of biological role, anorexigenic peptide. Increases the pigmentation of skin by increasing melanin production in melanocytes. Its function is as follows. Increases the pigmentation of skin by increasing melanin production in melanocytes. Endogenous orexigenic opiate. Functionally, endogenous opiate. This is Pro-opiomelanocortin (POMC) from Sus scrofa (Pig).